Here is a 204-residue protein sequence, read N- to C-terminus: Cobalt-containing nitrile hydratase subunit alpha (204 aa).

Residues Cys108, Cys111, Ser112, and Cys113 each coordinate Co(2+). Residue Cys111 is modified to Cysteine sulfinic acid (-SO2H). Residue Cys113 is modified to Cysteine sulfenic acid (-SOH).

Belongs to the nitrile hydratase subunit alpha family. In terms of assembly, heterotetramer of two alpha and two beta chains. Requires Co(2+) as cofactor.

It catalyses the reaction an aliphatic primary amide = an aliphatic nitrile + H2O. Functionally, NHase catalyzes the hydration of various nitrile compounds to the corresponding amides. In Pseudonocardia thermophila, this protein is Cobalt-containing nitrile hydratase subunit alpha.